The following is a 553-amino-acid chain: Nucleoside-diphosphatase mig-23 (553 aa).

At 1–8 the chain is on the cytoplasmic side; sequence MRVSRRFT. The chain crosses the membrane as a helical span at residues 9-29; sequence ILAITAMIFLSLIICIYAVAA. Topologically, residues 30-489 are lumenal; it reads HTTVNVILQK…IVKETHSASE (460 aa). Glu-174 acts as the Proton acceptor in catalysis. N-linked (GlcNAc...) asparagine glycans are attached at residues Asn-190 and Asn-284. A helical membrane pass occupies residues 490–510; that stretch reads SLWAPLFFLSAVFCLFVLVCA. Over 511–553 the chain is Cytoplasmic; that stretch reads KEHSLLCFDDKRRASFGLTRRQYSYKMLKEDRTSSSAFLENFA.

It belongs to the GDA1/CD39 NTPase family.

The protein localises to the golgi apparatus membrane. The catalysed reaction is a ribonucleoside 5'-diphosphate + H2O = a ribonucleoside 5'-phosphate + phosphate + H(+). Its function is as follows. Seems to be able to hydrolyze ADP, UDP and GDP. Supports mig-17 glycosylation and surface expression, which is required for proper migration of distal tip cells during gonad morphogenesis. This is Nucleoside-diphosphatase mig-23 from Caenorhabditis briggsae.